Here is an 875-residue protein sequence, read N- to C-terminus: MLIQFLTKIFSNHNNRILKKFKKIVLSVNKLEKNFEKLSDKELQAQTELFRLRLRNGETLDDILPEAFALVREASKRVFSMRHFDVQILGGIALNKQCIAEMRTGEGKTLTSTLPAYLNALNGKGVHIVTMNDYLARRDAEKNTPLFEFLGLTVGLNLSEMSFFSKRKAYLSDITYGTNNEYGFDYLRDNMVFSPEERVQRKLNYALVDEVDSILIDEARTPLIISGPSEDSSELYKEINKIVPFLNSQKKEDSDIFCGTGDFSIDEKSKQIYLTERGLIKVEKILFDKKLMNTGESLYSSNNIILMHHVLSALRAHKLFVRNVDYLVKDNSVIIVDEHTGRTMPGRRWSDGLHQAIEAKENVSIKNENQTLASITFQNYFRLYEKIAGMTGTAETESFEFNSIYNLDTIVIPTNRKMIRKDFPDLVYMTEKEKINAIIQDIQKCIKLNQPVLVGTVSIEKSEIISKELLKLNINHNVLNAKFHAKEAEIIAQAGKPGSITIATNMAGRGTDIVLGGNLEVELNKYKNITSRKIEEIKKKWQSEHDLVVSAGGLHIIGTERHESRRIDNQLRGRSGRQGDTGSSRFYLSMEDSLMRIFASDKIVHMMKKLGLAFNEAIEHSWVTKAIENAQKKVENRNFDIRKQLLEYDDVINEQRSAIYSQRNKLIDARDIKLMIYDIFKDVLKKNIILYIPKNTFHDKWNVTDLKDKLNIDFYLNAPILDWINIEPNLTDKKIIKRIIDFARINYKNKEILIGSNNMRIIEKIIMLQTLDSLWKEHLAAVDYLRQGIHLRGYAQKDPKQEYKRESFNMFSSMLELLKFEVVSFLSRINSSYAKKYIDLNKHLVITHNNTMKISRNSPCLCGSGKKYKYCHGSL.

Residues Gln87, Gly105 to Thr109, and Asp512 each bind ATP. Zn(2+) contacts are provided by Cys860, Cys862, Cys871, and His872.

It belongs to the SecA family. Monomer and homodimer. Part of the essential Sec protein translocation apparatus which comprises SecA, SecYEG and auxiliary proteins SecDF-YajC and YidC. Zn(2+) is required as a cofactor.

The protein resides in the cell inner membrane. The protein localises to the cytoplasm. The catalysed reaction is ATP + H2O + cellular proteinSide 1 = ADP + phosphate + cellular proteinSide 2.. Part of the Sec protein translocase complex. Interacts with the SecYEG preprotein conducting channel. Has a central role in coupling the hydrolysis of ATP to the transfer of proteins into and across the cell membrane, serving both as a receptor for the preprotein-SecB complex and as an ATP-driven molecular motor driving the stepwise translocation of polypeptide chains across the membrane. The polypeptide is Protein translocase subunit SecA (Buchnera aphidicola subsp. Acyrthosiphon pisum (strain 5A)).